A 233-amino-acid polypeptide reads, in one-letter code: Orotidine 5'-phosphate decarboxylase (233 aa).

Substrate is bound by residues Asp13, Lys35, 62–71 (DLKFHDIPNT), Thr122, Arg182, Gln191, Gly211, and Arg212. Lys64 serves as the catalytic Proton donor.

Belongs to the OMP decarboxylase family. Type 1 subfamily. As to quaternary structure, homodimer.

It catalyses the reaction orotidine 5'-phosphate + H(+) = UMP + CO2. Its pathway is pyrimidine metabolism; UMP biosynthesis via de novo pathway; UMP from orotate: step 2/2. Its function is as follows. Catalyzes the decarboxylation of orotidine 5'-monophosphate (OMP) to uridine 5'-monophosphate (UMP). The polypeptide is Orotidine 5'-phosphate decarboxylase (Pseudomonas fluorescens (strain ATCC BAA-477 / NRRL B-23932 / Pf-5)).